A 221-amino-acid chain; its full sequence is ATP phosphoribosyltransferase (221 aa).

It belongs to the ATP phosphoribosyltransferase family. Short subfamily. As to quaternary structure, heteromultimer composed of HisG and HisZ subunits.

The protein localises to the cytoplasm. It carries out the reaction 1-(5-phospho-beta-D-ribosyl)-ATP + diphosphate = 5-phospho-alpha-D-ribose 1-diphosphate + ATP. It functions in the pathway amino-acid biosynthesis; L-histidine biosynthesis; L-histidine from 5-phospho-alpha-D-ribose 1-diphosphate: step 1/9. Functionally, catalyzes the condensation of ATP and 5-phosphoribose 1-diphosphate to form N'-(5'-phosphoribosyl)-ATP (PR-ATP). Has a crucial role in the pathway because the rate of histidine biosynthesis seems to be controlled primarily by regulation of HisG enzymatic activity. In Carboxydothermus hydrogenoformans (strain ATCC BAA-161 / DSM 6008 / Z-2901), this protein is ATP phosphoribosyltransferase.